Consider the following 452-residue polypeptide: 3-phosphoshikimate 1-carboxyvinyltransferase (452 aa).

Low complexity predominate over residues 1–17 (MSHAAAAKPATARKSQA). The segment at 1–26 (MSHAAAAKPATARKSQALSGTARVPG) is disordered. The 3-phosphoshikimate site is built by lysine 28, serine 29, and arginine 33. Lysine 28 lines the phosphoenolpyruvate pocket. The phosphoenolpyruvate site is built by glycine 100 and arginine 128. Positions 174, 176, 327, and 354 each coordinate 3-phosphoshikimate. Glutamine 176 serves as a coordination point for phosphoenolpyruvate. Aspartate 327 functions as the Proton acceptor in the catalytic mechanism. The phosphoenolpyruvate site is built by arginine 358 and arginine 409.

This sequence belongs to the EPSP synthase family. In terms of assembly, monomer.

The protein localises to the cytoplasm. The catalysed reaction is 3-phosphoshikimate + phosphoenolpyruvate = 5-O-(1-carboxyvinyl)-3-phosphoshikimate + phosphate. The protein operates within metabolic intermediate biosynthesis; chorismate biosynthesis; chorismate from D-erythrose 4-phosphate and phosphoenolpyruvate: step 6/7. In terms of biological role, catalyzes the transfer of the enolpyruvyl moiety of phosphoenolpyruvate (PEP) to the 5-hydroxyl of shikimate-3-phosphate (S3P) to produce enolpyruvyl shikimate-3-phosphate and inorganic phosphate. This Mesorhizobium japonicum (strain LMG 29417 / CECT 9101 / MAFF 303099) (Mesorhizobium loti (strain MAFF 303099)) protein is 3-phosphoshikimate 1-carboxyvinyltransferase.